The sequence spans 310 residues: L-lactate dehydrogenase (310 aa).

Residues Val11, Asp32, Tyr62, and 76 to 77 contribute to the NAD(+) site; that span reads GV. Residues Gln79, Arg85, and 117–120 each bind substrate; that span reads NPVD. NAD(+)-binding positions include 115 to 117 and Ser140; that span reads ATN. 145 to 148 provides a ligand contact to substrate; the sequence is DTAR. Beta-D-fructose 1,6-bisphosphate-binding residues include Arg150 and His165. His172 (proton acceptor) is an active-site residue. A Phosphotyrosine modification is found at Tyr218. Residue Thr227 participates in substrate binding.

It belongs to the LDH/MDH superfamily. LDH family. As to quaternary structure, homotetramer.

The protein localises to the cytoplasm. It carries out the reaction (S)-lactate + NAD(+) = pyruvate + NADH + H(+). It participates in fermentation; pyruvate fermentation to lactate; (S)-lactate from pyruvate: step 1/1. Its activity is regulated as follows. Activated by citrate at pH 5. Allosterically activated by fructose 1,6-bisphosphate (FBP) at pH from 5.8 to 7.2. Functionally, catalyzes the conversion of lactate to pyruvate. In Thermus aquaticus, this protein is L-lactate dehydrogenase.